The following is a 142-amino-acid chain: Transcriptional regulator MraZ (142 aa).

SpoVT-AbrB domains lie at 5–47 and 76–119; these read EFTH…PLNE and ATDC…SAER.

This sequence belongs to the MraZ family. As to quaternary structure, forms oligomers.

The protein resides in the cytoplasm. The protein localises to the nucleoid. The polypeptide is Transcriptional regulator MraZ (Limosilactobacillus reuteri (strain DSM 20016) (Lactobacillus reuteri)).